The following is a 118-amino-acid chain: Non-specific lipid-transfer protein A (118 aa).

A signal peptide spans 1–25 (MAGVMKLACLVLACMIVAGPITANR). Cystine bridges form between C29/C76, C39/C53, C54/C100, and C74/C114.

Belongs to the plant LTP family.

Functionally, plant non-specific lipid-transfer proteins transfer phospholipids as well as galactolipids across membranes. May play a role in wax or cutin deposition in the cell walls of expanding epidermal cells and certain secretory tissues. The chain is Non-specific lipid-transfer protein A (WAX9A) from Brassica oleracea var. italica (Broccoli).